The following is a 1423-amino-acid chain: DNA-directed RNA polymerase, mitochondrial (1423 aa).

Residues 1 to 73 constitute a mitochondrion transit peptide; the sequence is MLPRTASATR…RATVGFERHL (73 aa). The tract at residues 266–303 is disordered; sequence NMPDNVDPDTFAQQQQQQQQQQQQQQEQQQQQDTSIDQ. Residues 278 to 297 are compositionally biased toward low complexity; sequence QQQQQQQQQQQQQQEQQQQQ. Active-site residues include Asp-901 and Lys-970. Over residues 1055-1064 the composition is skewed to basic and acidic residues; sequence EFERSERSPH. A disordered region spans residues 1055–1087; it reads EFERSERSPHGDGTASGENITLAGNPRKSSAHK. Residue Asp-1180 is part of the active site. The segment at 1316–1342 is disordered; it reads VRRGREMDEEGEVDGSEEAVEHEDGMH. Residues 1322 to 1336 show a composition bias toward acidic residues; sequence MDEEGEVDGSEEAVE.

It belongs to the phage and mitochondrial RNA polymerase family.

It localises to the mitochondrion. It carries out the reaction RNA(n) + a ribonucleoside 5'-triphosphate = RNA(n+1) + diphosphate. Functionally, DNA-dependent RNA polymerase catalyzes the transcription of DNA into RNA using the four ribonucleoside triphosphates as substrates. This is DNA-directed RNA polymerase, mitochondrial (cyt-5) from Neurospora crassa (strain ATCC 24698 / 74-OR23-1A / CBS 708.71 / DSM 1257 / FGSC 987).